A 294-amino-acid chain; its full sequence is Bifunctional protein FolD (294 aa).

Residues 166 to 168 (GRS), Ser191, and Ile232 each bind NADP(+).

It belongs to the tetrahydrofolate dehydrogenase/cyclohydrolase family. As to quaternary structure, homodimer.

The enzyme catalyses (6R)-5,10-methylene-5,6,7,8-tetrahydrofolate + NADP(+) = (6R)-5,10-methenyltetrahydrofolate + NADPH. The catalysed reaction is (6R)-5,10-methenyltetrahydrofolate + H2O = (6R)-10-formyltetrahydrofolate + H(+). It participates in one-carbon metabolism; tetrahydrofolate interconversion. In terms of biological role, catalyzes the oxidation of 5,10-methylenetetrahydrofolate to 5,10-methenyltetrahydrofolate and then the hydrolysis of 5,10-methenyltetrahydrofolate to 10-formyltetrahydrofolate. This is Bifunctional protein FolD from Nitrobacter winogradskyi (strain ATCC 25391 / DSM 10237 / CIP 104748 / NCIMB 11846 / Nb-255).